Consider the following 437-residue polypeptide: Dihydrofolate synthase/folylpolyglutamate synthase (437 aa).

28 to 30 (DLG) is a 7,8-dihydropteroate binding site. 58 to 61 (GKGT) is an ATP binding site. Ser82 contacts Mg(2+). A 7,8-dihydropteroate-binding site is contributed by 120–123 (TYFE). Glu144 is a binding site for Mg(2+). 151-153 (LDA) contacts 7,8-dihydropteroate. His171 is a Mg(2+) binding site. Residues Asn255, Arg287, and Asp316 each coordinate ATP.

The protein belongs to the folylpolyglutamate synthase family. In terms of assembly, monomer. Mg(2+) serves as cofactor.

It carries out the reaction 7,8-dihydropteroate + L-glutamate + ATP = 7,8-dihydrofolate + ADP + phosphate + H(+). It catalyses the reaction (6S)-5,6,7,8-tetrahydrofolyl-(gamma-L-Glu)(n) + L-glutamate + ATP = (6S)-5,6,7,8-tetrahydrofolyl-(gamma-L-Glu)(n+1) + ADP + phosphate + H(+). The enzyme catalyses 10-formyltetrahydrofolyl-(gamma-L-Glu)(n) + L-glutamate + ATP = 10-formyltetrahydrofolyl-(gamma-L-Glu)(n+1) + ADP + phosphate + H(+). The catalysed reaction is (6R)-5,10-methylenetetrahydrofolyl-(gamma-L-Glu)(n) + L-glutamate + ATP = (6R)-5,10-methylenetetrahydrofolyl-(gamma-L-Glu)(n+1) + ADP + phosphate + H(+). It functions in the pathway cofactor biosynthesis; tetrahydrofolate biosynthesis; 7,8-dihydrofolate from 2-amino-4-hydroxy-6-hydroxymethyl-7,8-dihydropteridine diphosphate and 4-aminobenzoate: step 2/2. Its pathway is cofactor biosynthesis; tetrahydrofolylpolyglutamate biosynthesis. Functions in two distinct reactions of the de novo folate biosynthetic pathway. Catalyzes the addition of a glutamate residue to dihydropteroate (7,8-dihydropteroate or H2Pte) to form dihydrofolate (7,8-dihydrofolate monoglutamate or H2Pte-Glu). Also catalyzes successive additions of L-glutamate to tetrahydrofolate or 10-formyltetrahydrofolate or 5,10-methylenetetrahydrofolate, leading to folylpolyglutamate derivatives. The polypeptide is Dihydrofolate synthase/folylpolyglutamate synthase (folC) (Haemophilus influenzae (strain ATCC 51907 / DSM 11121 / KW20 / Rd)).